The sequence spans 102 residues: Carboxysome shell protein CcmK2 (102 aa).

A BMC domain is found at 4–90; that stretch reads AVGMIETRGF…PHENLEYVLP (87 aa).

This sequence belongs to the bacterial microcompartments protein family. CcmK subfamily. Homohexamer. Stacked hexamers, with the concave faces together, have also been crystallized. Interacts preferentially with itself, then with CcmK1 and CcmK4a in vitro. May interact with CcmL, this occurs at very high CcmK2 concentrations. Interacts with CcmN and CcmO in the carboxysome.

It is found in the carboxysome. Probably the major shell protein of the carboxysome, a polyhedral inclusion where RuBisCO (ribulose bisphosphate carboxylase, rbcL-rbcS) is sequestered. Assembles into hexamers which make sheets that form the facets of the polyhedral carboxysome. The hexamer central pore probably regulates metabolite flux. This Thermosynechococcus vestitus (strain NIES-2133 / IAM M-273 / BP-1) protein is Carboxysome shell protein CcmK2.